The primary structure comprises 158 residues: Protein E6 (158 aa).

2 zinc fingers span residues 32-68 and 105-141; these read CVYC…CHKC and CLRC…CHSC. The short motif at 156–158 is the PDZ-binding domain element; the sequence is TQV.

This sequence belongs to the papillomaviridae E6 protein family. As to quaternary structure, forms homodimers. Interacts with ubiquitin-protein ligase UBE3A/E6-AP and thus forms a complex with human TP53. Interacts with human NFX1 and MAGI3. Interacts with human IRF3; this interaction inhibits the establishment of antiviral state. Interacts with human TYK2; this interaction inhibits JAK-STAT activation by interferon alpha. Interacts with host DLG1; this interaction leads to the proteasomal degradation of DLG1.

It is found in the host cytoplasm. The protein localises to the host nucleus. Functionally, plays a major role in the induction and maintenance of cellular transformation. Acts mainly as an oncoprotein by stimulating the destruction of many host cell key regulatory proteins. E6 associates with host UBE3A/E6-AP ubiquitin-protein ligase, and inactivates tumor suppressors TP53 and TP73 by targeting them to the 26S proteasome for degradation. In turn, DNA damage and chromosomal instabilities increase and lead to cell proliferation and cancer development. The complex E6/E6AP targets several other substrates to degradation via the proteasome including host DLG1 or NFX1, a repressor of human telomerase reverse transcriptase (hTERT). The resulting increased expression of hTERT prevents the shortening of telomere length leading to cell immortalization. Other cellular targets including BAK1, Fas-associated death domain-containing protein (FADD) and procaspase 8, are degraded by E6/E6AP causing inhibition of apoptosis. E6 also inhibits immune response by interacting with host IRF3 and TYK2. These interactions prevent IRF3 transcriptional activities and inhibit TYK2-mediated JAK-STAT activation by interferon alpha resulting in inhibition of the interferon signaling pathway. This is Protein E6 from Homo sapiens (Human).